A 397-amino-acid chain; its full sequence is Argininosuccinate synthase (397 aa).

9–17 is a binding site for ATP; it reads AYSGGLDTT. Tyr87 lines the L-citrulline pocket. Residue Gly117 participates in ATP binding. Residues Thr119, Asn123, and Asp124 each contribute to the L-aspartate site. Residue Asn123 participates in L-citrulline binding. Residues Arg127, Ser174, Ser183, Glu259, and Tyr271 each contribute to the L-citrulline site.

The protein belongs to the argininosuccinate synthase family. Type 1 subfamily. As to quaternary structure, homotetramer.

Its subcellular location is the cytoplasm. The catalysed reaction is L-citrulline + L-aspartate + ATP = 2-(N(omega)-L-arginino)succinate + AMP + diphosphate + H(+). It participates in amino-acid biosynthesis; L-arginine biosynthesis; L-arginine from L-ornithine and carbamoyl phosphate: step 2/3. The polypeptide is Argininosuccinate synthase (Pyrobaculum aerophilum (strain ATCC 51768 / DSM 7523 / JCM 9630 / CIP 104966 / NBRC 100827 / IM2)).